A 424-amino-acid chain; its full sequence is Testican-2 (424 aa).

An N-terminal signal peptide occupies residues methionine 1–alanine 22. Serine 72 is modified (phosphoserine; by FAM20C). Disulfide bonds link cysteine 90–cysteine 101, cysteine 95–cysteine 111, cysteine 136–cysteine 166, cysteine 139–cysteine 159, and cysteine 148–cysteine 180. A Kazal-like domain is found at glycine 130–cysteine 182. N-linked (GlcNAc...) asparagine glycosylation is present at asparagine 225. In terms of domain architecture, Thyroglobulin type-1 spans lysine 310 to cysteine 376. 3 disulfides stabilise this stretch: cysteine 313/cysteine 337, cysteine 348/cysteine 355, and cysteine 357/cysteine 376. O-linked (Xyl...) (glycosaminoglycan) serine glycans are attached at residues serine 383 and serine 388. The interval glycine 387–tryptophan 424 is disordered. Over residues tryptophan 392 to tryptophan 424 the composition is skewed to acidic residues.

Contains chondroitin sulfate and heparan sulfate O-linked oligosaccharides. Highly expressed in brain. Also found in lung and testis.

It is found in the secreted. The protein resides in the extracellular space. Its subcellular location is the extracellular matrix. In terms of biological role, may participate in diverse steps of neurogenesis. Binds calcium. The polypeptide is Testican-2 (SPOCK2) (Homo sapiens (Human)).